The primary structure comprises 598 residues: Probable pectinesterase/pectinesterase inhibitor 34 (598 aa).

The disordered stretch occupies residues 1–40; sequence MGYERLGPSGATGSVTTSTTTAPILNQVSTSEQPENNNRR. Residues 7 to 23 show a composition bias toward low complexity; sequence GPSGATGSVTTSTTTAP. The segment covering 24–36 has biased composition (polar residues); it reads ILNQVSTSEQPEN. Residues 46–66 traverse the membrane as a helical segment; the sequence is VVSSIVLAISLILAAAIFAGV. The interval 81-232 is pectinesterase inhibitor 34; that stretch reads RKPSQAISKA…SELVSNCLAI (152 aa). Positions 284-582 are pectinesterase 34; that stretch reads DIIVSKDGNG…FTVAEFIYGS (299 aa). Substrate-binding residues include Thr-360 and Gln-390. Asp-413 serves as the catalytic Proton donor; for pectinesterase activity. Residues Cys-427 and Cys-447 are joined by a disulfide bond. Asp-434 serves as the catalytic Nucleophile; for pectinesterase activity. Substrate-binding residues include Arg-502 and Trp-504.

This sequence in the N-terminal section; belongs to the PMEI family. The protein in the C-terminal section; belongs to the pectinesterase family. As to expression, expressed in siliques.

The protein resides in the membrane. The catalysed reaction is [(1-&gt;4)-alpha-D-galacturonosyl methyl ester](n) + n H2O = [(1-&gt;4)-alpha-D-galacturonosyl](n) + n methanol + n H(+). It functions in the pathway glycan metabolism; pectin degradation; 2-dehydro-3-deoxy-D-gluconate from pectin: step 1/5. Its function is as follows. Acts in the modification of cell walls via demethylesterification of cell wall pectin. This Arabidopsis thaliana (Mouse-ear cress) protein is Probable pectinesterase/pectinesterase inhibitor 34 (PME34).